Reading from the N-terminus, the 157-residue chain is Succinate dehydrogenase [ubiquinone] cytochrome b small subunit, mitochondrial (157 aa).

Residues 1-45 (MAALVLLRAGLARPRGVPTALLRGTLLRHSAVLTAAADRSAPARQ) constitute a mitochondrion transit peptide. Topologically, residues 46-61 (SHGGAPQGHGSSKAAS) are mitochondrial matrix. The helical transmembrane segment at 62–83 (LHWTSERAVSALLLGLLPAAYL) threads the bilayer. Residues 84 to 88 (YPGPA) lie on the Mitochondrial intermembrane side of the membrane. The chain crosses the membrane as a helical span at residues 89 to 109 (VDYSLAAALTLHGHWGLGQVI). His100 provides a ligand contact to heme b. Residues 110–118 (TDYVHGDTP) lie on the Mitochondrial matrix side of the membrane. Tyr112 lines the a ubiquinone pocket. Residues 119–140 (IKVANTGLYVLSAITFTGLCYF) form a helical membrane-spanning segment. Topologically, residues 141 to 157 (NYYDVGICKAVAMLWSI) are mitochondrial intermembrane.

It belongs to the CybS family. As to quaternary structure, component of complex II composed of four subunits: the flavoprotein (FP) SDHA, iron-sulfur protein (IP) SDHB, and a cytochrome b560 composed of SDHC and SDHD.

It localises to the mitochondrion inner membrane. It participates in carbohydrate metabolism; tricarboxylic acid cycle. Membrane-anchoring subunit of succinate dehydrogenase (SDH) that is involved in complex II of the mitochondrial electron transport chain and is responsible for transferring electrons from succinate to ubiquinone (coenzyme Q). SDH also oxidizes malate to the non-canonical enol form of oxaloacetate, enol-oxaloacetate. Enol-oxaloacetate, which is a potent inhibitor of the succinate dehydrogenase activity, is further isomerized into keto-oxaloacetate. The protein is Succinate dehydrogenase [ubiquinone] cytochrome b small subunit, mitochondrial (SDHD) of Gallus gallus (Chicken).